Here is a 292-residue protein sequence, read N- to C-terminus: Acetyl-coenzyme A carboxylase carboxyl transferase subunit beta (292 aa).

The region spanning 23–292 (VWSKCTACGN…TEATEVSVNE (270 aa)) is the CoA carboxyltransferase N-terminal domain. Positions 27, 30, 46, and 49 each coordinate Zn(2+). Residues 27 to 49 (CTACGNIIYKADLERSLNVCPKC) form a C4-type zinc finger.

The protein belongs to the AccD/PCCB family. As to quaternary structure, acetyl-CoA carboxylase is a heterohexamer composed of biotin carboxyl carrier protein (AccB), biotin carboxylase (AccC) and two subunits each of ACCase subunit alpha (AccA) and ACCase subunit beta (AccD). It depends on Zn(2+) as a cofactor.

It localises to the cytoplasm. It carries out the reaction N(6)-carboxybiotinyl-L-lysyl-[protein] + acetyl-CoA = N(6)-biotinyl-L-lysyl-[protein] + malonyl-CoA. Its pathway is lipid metabolism; malonyl-CoA biosynthesis; malonyl-CoA from acetyl-CoA: step 1/1. In terms of biological role, component of the acetyl coenzyme A carboxylase (ACC) complex. Biotin carboxylase (BC) catalyzes the carboxylation of biotin on its carrier protein (BCCP) and then the CO(2) group is transferred by the transcarboxylase to acetyl-CoA to form malonyl-CoA. The protein is Acetyl-coenzyme A carboxylase carboxyl transferase subunit beta of Idiomarina loihiensis (strain ATCC BAA-735 / DSM 15497 / L2-TR).